The primary structure comprises 807 residues: MSHLLPFPRRRLALACLLASISGASFGQTQCDVAQLQQSPDLATAISSADYACYSGWFSASSDTLNNIYSEASLSRVQVALHQAVQTYQGEAEQARAIENLGEYVRAAYYVRYNAGNVAAFSDLLGQQFAHTINAFLANPHALDQGREQVGAMKSLTLMVDNIKQLPLTMDAMMLALQQFNPETAKNTQWVDGLNNLFRSMAGHIANDAFYRYLASNTQHIDMLEKFANDNAWALDTDADFLVFNALRETGRLIASPDKATKQKAVQVMQRVMARYPLGSEHDKLWLAAVEMLSYFAPEALNGLDLPQAKRDLAARVLPNRHECQGPAIIRSQDLTPEQAAKACDVLAAKEADFHQVANTGMQPVADDHNQRVEVAVFANNDSYVDYSAFLFGNTTDNGGQYLEGNPADEHNTARFVAYRYANGEELSILNLEHEYTHYLDARFNQYGSFSDNLAHGYVVWWLEGFAEYMHYKQGYQAAIELIAQGKMSLSQVFATSYSHDTNRIYRWGYLAVRFMLENHPQEVEGLLALSRSGQFEQWAQQVQTLGQQYDGEFARWLDGLEVTPENPDTDPDTPTEPSDGVTQLQANQSITLSGKAYSEKLFYVDVPANTTHFSVAIEGDGDADLYMSYNQVAHYYDFEVSKFVDGSNEEIQFAADASGYVKPGRYYLSVTGRGRYQAVNLTATIDTAAPTPPTQEQDDLAPVMLQSGQAQHLTVHQQRYAAVYVPEGVSEVRIWLSDLTSSDSQGNVNLYASREHWPTPEQHQFASRYAGSNQYLAIPVEQAGYLHFSLNAPQQGDDVEMVVYFH.

Positions 1–27 (MSHLLPFPRRRLALACLLASISGASFG) are cleaved as a signal peptide. Histidine 434 is a Zn(2+) binding site. Glutamate 435 is an active-site residue. Histidine 438 is a Zn(2+) binding site. The disordered stretch occupies residues 562 to 585 (EVTPENPDTDPDTPTEPSDGVTQL).

It belongs to the peptidase M9A family. The cofactor is Zn(2+).

The protein localises to the secreted. The enzyme catalyses Digestion of native collagen in the triple helical region at Xaa-|-Gly bonds. With synthetic peptides, a preference is shown for Gly at P3 and P1', Pro and Ala at P2 and P2', and hydroxyproline, Ala or Arg at P3'.. Its function is as follows. Possesses gelatinolytic activity. The polypeptide is Microbial collagenase (Vibrio vulnificus (strain CMCP6)).